Consider the following 68-residue polypeptide: Small ribosomal subunit protein bS21 (68 aa).

A disordered region spans residues 36-68; it reads YEKPSEKRARERAAAVRRSRKLERKRAERDGIR. Basic and acidic residues predominate over residues 37–49; that stretch reads EKPSEKRARERAA. The segment covering 50-59 has biased composition (basic residues); it reads AVRRSRKLER.

It belongs to the bacterial ribosomal protein bS21 family.

In Zymomonas mobilis subsp. mobilis (strain ATCC 31821 / ZM4 / CP4), this protein is Small ribosomal subunit protein bS21.